We begin with the raw amino-acid sequence, 596 residues long: Myosin light chain kinase 2, skeletal/cardiac muscle (596 aa).

The tract at residues 1–224 (MATENGAVEL…AGQAKMQGDT (224 aa)) is disordered. Position 2 is an N-acetylalanine (A2). Basic and acidic residues predominate over residues 40-63 (DPKKAPDPPTLKKDAKAPASEKGD). Low complexity predominate over residues 88-104 (EGSAGPPAALPQQTATP). Residues S143, S149, and S151 each carry the phosphoserine modification. Residues 189–209 (RPAKAEEGKNILAESQKEVGE) are compositionally biased toward basic and acidic residues. The 256-residue stretch at 285-540 (MNSKEALGGG…AAQCLAHPWL (256 aa)) folds into the Protein kinase domain. Residues 291–299 (LGGGKFGAV) and K314 each bind ATP. Catalysis depends on D406, which acts as the Proton acceptor. T445 bears the Phosphothreonine mark. Residues 574–586 (IAVSAANRFKKIS) form a calmodulin-binding region.

The protein belongs to the protein kinase superfamily. CAMK Ser/Thr protein kinase family. In terms of assembly, may interact with centrin. In terms of tissue distribution, heart and skeletal muscles. Increased expression in the apical tissue compared to the interventricular septal tissue.

Its subcellular location is the cytoplasm. It catalyses the reaction L-seryl-[myosin light chain] + ATP = O-phospho-L-seryl-[myosin light chain] + ADP + H(+). The enzyme catalyses L-threonyl-[myosin light chain] + ATP = O-phospho-L-threonyl-[myosin light chain] + ADP + H(+). Implicated in the level of global muscle contraction and cardiac function. Phosphorylates a specific serine in the N-terminus of a myosin light chain. This is Myosin light chain kinase 2, skeletal/cardiac muscle (MYLK2) from Homo sapiens (Human).